The following is a 167-amino-acid chain: Lipoprotein signal peptidase (167 aa).

3 helical membrane-spanning segments follow: residues 9–29, 68–88, and 98–118; these read AWLY…TKNL, LPLL…YALY, and MGLI…LGMV. Residues Asp120 and Asp138 contribute to the active site. Residues 130-150 form a helical membrane-spanning segment; the sequence is YWPAFNIADASISIGIALLIL.

It belongs to the peptidase A8 family.

It localises to the cell inner membrane. It catalyses the reaction Release of signal peptides from bacterial membrane prolipoproteins. Hydrolyzes -Xaa-Yaa-Zaa-|-(S,diacylglyceryl)Cys-, in which Xaa is hydrophobic (preferably Leu), and Yaa (Ala or Ser) and Zaa (Gly or Ala) have small, neutral side chains.. It functions in the pathway protein modification; lipoprotein biosynthesis (signal peptide cleavage). This protein specifically catalyzes the removal of signal peptides from prolipoproteins. This Aquifex aeolicus (strain VF5) protein is Lipoprotein signal peptidase.